The sequence spans 344 residues: Trace amine-associated receptor 8c (344 aa).

The Extracellular portion of the chain corresponds to 1–31; it reads MTSNFSQPALQLCYENTNGSCIKTPYSPGPR. 2 N-linked (GlcNAc...) asparagine glycosylation sites follow: asparagine 4 and asparagine 18. Cystine bridges form between cysteine 21/cysteine 185 and cysteine 104/cysteine 189. The chain crosses the membrane as a helical span at residues 32-52; the sequence is VILYMVYGFGAVLAVCGNLLV. The Cytoplasmic portion of the chain corresponds to 53–67; the sequence is VISVLHFKQLHSPAN. Residues 68-88 form a helical membrane-spanning segment; it reads FLIASLASADFLVGISVMPFS. Topologically, residues 89–111 are extracellular; it reads MVRSIESCWYFGDAFCSLHSCCD. The helical transmembrane segment at 112–132 threads the bilayer; it reads VAFCYSSALHLCFISVDRYIA. Topologically, residues 133–146 are cytoplasmic; that stretch reads VTDPLVYPTKFTVS. A helical membrane pass occupies residues 147–167; it reads VSGICISISWILPLVYSSAVF. Residues 168–195 are Extracellular-facing; that stretch reads YTGISAKGIESLVSALNCVGGCQVVVNQ. A helical membrane pass occupies residues 196-216; that stretch reads DWVLISFLLFFIPTVVMIILY. The Cytoplasmic segment spans residues 217 to 260; the sequence is SKIFLVAKQQAVKIETSVSGNRGESSSESHKARVAKRERKAAKT. The chain crosses the membrane as a helical span at residues 261 to 281; the sequence is LGVTVVAFMVSWLPYTIDALV. Residue aspartate 282 is a topological domain, extracellular. A helical membrane pass occupies residues 283–303; the sequence is AFMGFITPAYVYEICCWSAYY. Topologically, residues 304-344 are cytoplasmic; it reads NSAMNPLIYAFFYPWFRKAIKLILSGKILKGHSSTTNLFSE.

It belongs to the G-protein coupled receptor 1 family. As to expression, specifically expressed in neurons of the olfactory epithelium.

Its subcellular location is the cell membrane. Olfactory receptor specific for trace amines, such ascyclohexylamine (1-MPD). Trace amine compounds are enriched in animal body fluids and act on trace amine-associated receptors (TAARs) to elicit both intraspecific and interspecific innate behaviors. Ligand-binding causes a conformation change that triggers signaling via G(s)-class of G alpha proteins (GNAL or GNAS). This Mus musculus (Mouse) protein is Trace amine-associated receptor 8c.